A 199-amino-acid polypeptide reads, in one-letter code: Peptidyl-prolyl cis-trans isomerase CYP22 (199 aa).

Residues 35-198 form the PPIase cyclophilin-type domain; sequence FFDVSIGGIP…LAVVITECGE (164 aa).

It belongs to the cyclophilin-type PPIase family. Ubiquitous.

The catalysed reaction is [protein]-peptidylproline (omega=180) = [protein]-peptidylproline (omega=0). PPIases accelerate the folding of proteins. It catalyzes the cis-trans isomerization of proline imidic peptide bonds in oligopeptides. This is Peptidyl-prolyl cis-trans isomerase CYP22 (CYP22) from Arabidopsis thaliana (Mouse-ear cress).